The primary structure comprises 144 residues: Cytochrome c'' (144 aa).

Positions 1 to 20 are cleaved as a signal peptide; sequence MKIKTIIAVFGVLFSAHALA. 4 residues coordinate heme c: cysteine 69, cysteine 72, histidine 73, and histidine 115. Cysteine 116 and cysteine 124 are oxidised to a cystine.

As to quaternary structure, monomer. Binds 1 heme c group covalently per subunit. The heme is low-spin in the oxidized state but switches to a high-spin form upon reduction, due to the dissociation of one of the axial histidines, His-115.

This is Cytochrome c'' (cycA) from Methylophilus methylotrophus (Bacterium W3A1).